We begin with the raw amino-acid sequence, 306 residues long: tRNA pseudouridine synthase B (306 aa).

The active-site Nucleophile is Asp-39.

This sequence belongs to the pseudouridine synthase TruB family. Type 1 subfamily.

The catalysed reaction is uridine(55) in tRNA = pseudouridine(55) in tRNA. Its function is as follows. Responsible for synthesis of pseudouridine from uracil-55 in the psi GC loop of transfer RNAs. The polypeptide is tRNA pseudouridine synthase B (Arthrobacter sp. (strain FB24)).